A 454-amino-acid chain; its full sequence is Enolase (454 aa).

Glutamine 167 contacts (2R)-2-phosphoglycerate. Glutamate 209 serves as the catalytic Proton donor. Mg(2+)-binding residues include aspartate 250, glutamate 312, and aspartate 339. Residues lysine 364, arginine 393, serine 394, and lysine 415 each coordinate (2R)-2-phosphoglycerate. The active-site Proton acceptor is the lysine 364.

The protein belongs to the enolase family. Requires Mg(2+) as cofactor.

The protein resides in the cytoplasm. It localises to the secreted. It is found in the cell surface. The catalysed reaction is (2R)-2-phosphoglycerate = phosphoenolpyruvate + H2O. It functions in the pathway carbohydrate degradation; glycolysis; pyruvate from D-glyceraldehyde 3-phosphate: step 4/5. In terms of biological role, catalyzes the reversible conversion of 2-phosphoglycerate (2-PG) into phosphoenolpyruvate (PEP). It is essential for the degradation of carbohydrates via glycolysis. In Mycoplasmopsis agalactiae (strain NCTC 10123 / CIP 59.7 / PG2) (Mycoplasma agalactiae), this protein is Enolase.